The following is a 54-amino-acid chain: Ovomucoid (54 aa).

A Kazal-like domain is found at 4 to 54 (VDCSDYPKPACTVEYMPLCGSDNKTYGNKCNFCNAVVDSNGTLTLSHFGKC). 3 disulfides stabilise this stretch: cysteine 6–cysteine 36, cysteine 14–cysteine 33, and cysteine 22–cysteine 54. N-linked (GlcNAc...) asparagine glycosylation occurs at asparagine 43.

Its subcellular location is the secreted. This is Ovomucoid from Anser canagicus (Emperor goose).